The primary structure comprises 500 residues: L-arabinose isomerase (500 aa).

Glutamate 306, glutamate 333, histidine 350, and histidine 450 together coordinate Mn(2+).

Belongs to the arabinose isomerase family. In terms of assembly, homohexamer. Mn(2+) serves as cofactor.

It carries out the reaction beta-L-arabinopyranose = L-ribulose. It participates in carbohydrate degradation; L-arabinose degradation via L-ribulose; D-xylulose 5-phosphate from L-arabinose (bacterial route): step 1/3. Catalyzes the conversion of L-arabinose to L-ribulose. In Escherichia fergusonii (strain ATCC 35469 / DSM 13698 / CCUG 18766 / IAM 14443 / JCM 21226 / LMG 7866 / NBRC 102419 / NCTC 12128 / CDC 0568-73), this protein is L-arabinose isomerase.